We begin with the raw amino-acid sequence, 257 residues long: Imidazole glycerol phosphate synthase subunit HisF (257 aa).

Active-site residues include Asp12 and Asp131.

The protein belongs to the HisA/HisF family. As to quaternary structure, heterodimer of HisH and HisF.

Its subcellular location is the cytoplasm. It catalyses the reaction 5-[(5-phospho-1-deoxy-D-ribulos-1-ylimino)methylamino]-1-(5-phospho-beta-D-ribosyl)imidazole-4-carboxamide + L-glutamine = D-erythro-1-(imidazol-4-yl)glycerol 3-phosphate + 5-amino-1-(5-phospho-beta-D-ribosyl)imidazole-4-carboxamide + L-glutamate + H(+). Its pathway is amino-acid biosynthesis; L-histidine biosynthesis; L-histidine from 5-phospho-alpha-D-ribose 1-diphosphate: step 5/9. Its function is as follows. IGPS catalyzes the conversion of PRFAR and glutamine to IGP, AICAR and glutamate. The HisF subunit catalyzes the cyclization activity that produces IGP and AICAR from PRFAR using the ammonia provided by the HisH subunit. The protein is Imidazole glycerol phosphate synthase subunit HisF of Mycobacteroides abscessus (strain ATCC 19977 / DSM 44196 / CCUG 20993 / CIP 104536 / JCM 13569 / NCTC 13031 / TMC 1543 / L948) (Mycobacterium abscessus).